Here is a 103-residue protein sequence, read N- to C-terminus: Potassium voltage-gated channel subfamily E member 3 (103 aa).

N-linked (GlcNAc...) asparagine glycans are attached at residues Asn-5, Asn-22, and Asn-41. A disordered region spans residues 32–53; it reads RPGPGLGPDNQTEERRASLPGR. Over residues 43 to 53 the composition is skewed to basic and acidic residues; that stretch reads TEERRASLPGR. Residues 57-77 form a helical membrane-spanning segment; sequence SYMYILFVMFLFAVTVGSLIL. Residues 68–79 form an interaction with KCNQ1 region; sequence FAVTVGSLILGY. Topologically, residues 78-103 are cytoplasmic; it reads GYTRSRKVDKRSDPYHVYIKNRVSMI.

The protein belongs to the potassium channel KCNE family. As to quaternary structure, interacts with KCNB1. Interacts with KCNC2. Associates with KCNC4/Kv3.4. Interacts with KCNQ1; associates with a KCNQ1:KCNE3 stoichiometry of 4:4; produces a current with nearly instantaneous activation with a linear current-voltage relationship and alters membrane raft localization; affects KCNQ1 structure and gating properties. In terms of tissue distribution, expressed in hippocampal neurons (at protein level). Widely expressed with highest levels in kidney and moderate levels in small intestine.

It localises to the cell membrane. It is found in the cytoplasm. The protein resides in the perikaryon. The protein localises to the cell projection. Its subcellular location is the dendrite. It localises to the membrane raft. In terms of biological role, ancillary protein that functions as a regulatory subunit of the voltage-gated potassium (Kv) channel complex composed of pore-forming and potassium-conducting alpha subunits and of regulatory beta subunits. KCNE3 beta subunit modulates the gating kinetics and enhances stability of the channel complex. Alters the gating of the delayed rectifier Kv channel containing KCNB1 alpha subunit. Associates with KCNC4/Kv3.4 alpha subunit to form the subthreshold Kv channel in skeletal muscle and to establish the resting membrane potential (RMP) in muscle cells. Association with KCNQ1/KCLQT1 alpha subunit may form the intestinal cAMP-stimulated potassium channel involved in chloride secretion that produces a current with nearly instantaneous activation with a linear current-voltage relationship. The sequence is that of Potassium voltage-gated channel subfamily E member 3 from Homo sapiens (Human).